The sequence spans 327 residues: tRNA N6-adenosine threonylcarbamoyltransferase (327 aa).

Residues His109 and His113 each coordinate Fe cation. Substrate-binding positions include 132–136 (MVSGG), Asp165, Gly178, Asp182, and Asn268. Fe cation is bound at residue Asp296.

The protein belongs to the KAE1 / TsaD family. Forms a hexamer composed of two TsaB, TsaD and TsaE trimers. The cofactor is Fe(2+).

Its subcellular location is the cytoplasm. The enzyme catalyses L-threonylcarbamoyladenylate + adenosine(37) in tRNA = N(6)-L-threonylcarbamoyladenosine(37) in tRNA + AMP + H(+). Its function is as follows. Required for the formation of a threonylcarbamoyl group on adenosine at position 37 (t(6)A37) in tRNAs that read codons beginning with adenine. Is involved in the transfer of the threonylcarbamoyl moiety of threonylcarbamoyl-AMP (TC-AMP) to the N6 group of A37, together with TsaE and TsaB. TsaD likely plays a direct catalytic role in this reaction. The polypeptide is tRNA N6-adenosine threonylcarbamoyltransferase (Thermotoga maritima (strain ATCC 43589 / DSM 3109 / JCM 10099 / NBRC 100826 / MSB8)).